We begin with the raw amino-acid sequence, 516 residues long: Maturase K (516 aa).

The protein belongs to the intron maturase 2 family. MatK subfamily.

It is found in the plastid. The protein localises to the chloroplast. In terms of biological role, usually encoded in the trnK tRNA gene intron. Probably assists in splicing its own and other chloroplast group II introns. The chain is Maturase K from Colchicum speciosum (Giant meadow saffron).